The primary structure comprises 212 residues: Adenylate kinase (212 aa).

Residue 14–19 coordinates ATP; sequence GSGKGT. Positions 34–63 are NMP; it reads STGDLFRKKISEDSQFAAQIQNYLSSGSYV. AMP contacts are provided by residues threonine 35, arginine 40, 61-63, 89-92, and glutamine 96; these read SYV and GYPR. The tract at residues 126–163 is LID; the sequence is QRLFCQKCQKSYNLLLAKPKNGLKCDLDNTDLITRNDD. Arginine 127 lines the ATP pocket. Zn(2+)-binding residues include cysteine 130 and cysteine 133. 136–137 lines the ATP pocket; the sequence is SY. Positions 150 and 153 each coordinate Zn(2+). Positions 160 and 171 each coordinate AMP. Residue glutamine 199 participates in ATP binding.

The protein belongs to the adenylate kinase family. In terms of assembly, monomer.

Its subcellular location is the cytoplasm. It carries out the reaction AMP + ATP = 2 ADP. It functions in the pathway purine metabolism; AMP biosynthesis via salvage pathway; AMP from ADP: step 1/1. Functionally, catalyzes the reversible transfer of the terminal phosphate group between ATP and AMP. Plays an important role in cellular energy homeostasis and in adenine nucleotide metabolism. The protein is Adenylate kinase of Mesomycoplasma hyopneumoniae (strain 7448) (Mycoplasma hyopneumoniae).